Here is a 715-residue protein sequence, read N- to C-terminus: Protein DOA1 (715 aa).

WD repeat units follow at residues 11-40 (GHDQ…RLWS), 53-82 (GQGF…NGVP), 97-125 (GHQG…KVWK), 135-166 (AHNA…KLWQ), 177-206 (IHND…KLVD), 218-247 (GHES…RIWS), and 259-288 (LPAI…RIFS). At Ser332 the chain carries Phosphoserine. The region spanning 352-449 (AHQFSNSSWK…NGISLDQPND (98 aa)) is the PFU domain. Residues 434 to 440 (FILKNTN) are interaction with HSE1. One can recognise a PUL domain in the interval 465-715 (KVLPVKQYLI…RFKDIFDDLS (251 aa)). 6 ARM repeats span residues 478–512 (YNPD…LHDI), 513–543 (DESW…VRLI), 544–582 (VKKL…CFNN), 583–635 (ENWG…LVTK), 636–680 (GNSD…LATV), and 681–715 (EPTL…DDLS).

The protein belongs to the WD repeat PLAP family. As to quaternary structure, forms a complex composed of CDC48, NPL4, UFD1, DOA1, SHP1 and deubiquitinase OTU1; within the complex interacts with CDC48. Interacts (via PUL domain) with CDC48 (via C-terminus); the interaction is direct. Forms a complex composed of CDC48, DOA1, deubiquitinase UBP3 and probably BRE5; within the complex interacts with CDC48 and UBP3. May form a complex composed of VPS27, HSE1 and DOA1. Interacts with HSE1 (via SH3 domain). Interacts (via WD repeats and PFU domain) with ubiquitin; the interaction is direct. Interacts with ubiquitinated FZO1 but not unmodified FZO1; the interaction recruits FZO1 to CDC48 and promotes FZO1 proteasomal degradation.

Its subcellular location is the nucleus. It is found in the cytoplasm. The protein localises to the mitochondrion outer membrane. The protein resides in the endosome membrane. Ubiquitin-binding protein involved in protein ubiquitination, sorting and degradation. Acts as a ubiquitinated substrate-recruiting adapter for chaperone ATPase CDC48 by binding mono- or polyubiquitin chains. Depending on the context, promotes or prevents proteasomal degradation of ubiquitinated proteins. Involved in the ubiquitin fusion degradation (UFD) pathway by promoting the degradation of ubiquitinated proteins. Involved in the mitochondria-associated degradation pathway (MAD) by promoting the degradation of several ubiquitinated membrane proteins. By competing with UFD2 to bind CDC48, prevents the multi-ubiquitination and subsequent degradation of UFD2-dependent substrates. Required for ribophagy, a process which relocalizes ribosomal particles into the vacuole for degradation in response to starvation. Involved in the ubiquitin-mediated sorting of membrane proteins into multivesicular bodies (MVBs). In addition, plays an essential role in maintaining cellular ubiquitin levels. May affect indirectly the degradation of ubiquitinylated proteins by regulating cellular ubiquitin levels. In Saccharomyces cerevisiae (strain ATCC 204508 / S288c) (Baker's yeast), this protein is Protein DOA1.